We begin with the raw amino-acid sequence, 414 residues long: Nuclear localization sequence-binding protein (414 aa).

Disordered stretches follow at residues 1-172, 244-264, and 336-414; these read MAKT…TIFV, STSK…TPSE, and RPVR…KTFD. Residues 10–26 are compositionally biased toward basic and acidic residues; that stretch reads NKKEVKASKQAKEEKAK. 2 stretches are compositionally biased toward low complexity: residues 27–44 and 54–73; these read AVSS…SSSE and ESSS…SSSD. Basic and acidic residues predominate over residues 78-87; that stretch reads AETKKEESKD. A phosphoserine mark is found at serine 93, serine 95, serine 96, serine 97, serine 116, serine 127, serine 129, serine 131, and serine 143. Acidic residues predominate over residues 96-105; the sequence is SSDEEEEEEK. The segment covering 106 to 117 has biased composition (basic and acidic residues); sequence EETKKEESKESS. Over residues 118–128 the composition is skewed to low complexity; it reads SSDSSSSSSSD. The segment covering 134-144 has biased composition (basic and acidic residues); the sequence is EESNDKKRKSE. 2 consecutive RRM domains span residues 168-246 and 267-345; these read ATIF…MSTS and DTLF…FSSP. The segment covering 351–386 has biased composition (gly residues); it reads GGRGGSRGFGGRGGGRGGNRGFGGRGGARGGRGGFR. At arginine 353 the chain carries Omega-N-methylarginine. An RGG-box region spans residues 353–384; it reads RGGSRGFGGRGGGRGGNRGFGGRGGARGGRGG. 3 positions are modified to asymmetric dimethylarginine; by HMT1; alternate: arginine 357, arginine 362, and arginine 366. 3 positions are modified to omega-N-methylarginine; by HMT1; alternate: arginine 357, arginine 362, and arginine 366. An RNA-binding RGG-box region spans residues 366–384; sequence RGGNRGFGGRGGARGGRGG. Arginine 370 bears the Omega-N-methylarginine mark. 3 positions are modified to asymmetric dimethylarginine; by HMT1; alternate: arginine 375, arginine 379, and arginine 382. Omega-N-methylarginine; by HMT1; alternate is present on residues arginine 375, arginine 379, and arginine 382. An Omega-N-methylarginine modification is found at arginine 386.

Belongs to the RRM GAR family. Methylated by HMT1, forming asymmetric dimethylarginines (DMA) within a domain referred to as an RGG box, made up of repeated Gly-Gly dipeptides interspersed with Arg and aromatic residues. Post-translationally, pyrophosphorylated by 5-diphosphoinositol pentakisphosphate (5-IP7). Serine pyrophosphorylation is achieved by Mg(2+)-dependent, but enzyme independent transfer of a beta-phosphate from a inositol pyrophosphate to a pre-phosphorylated serine residue.

The protein localises to the nucleus. It is found in the nucleolus. Functionally, involved in pre-rRNA processing. Specifically binds nuclear localization sequences. Candidate for a receptor at the nucleus that may be involved in both RNA and protein transport. Binds telomeric sequences of the type (TG[1-3])n in vitro. The chain is Nuclear localization sequence-binding protein from Saccharomyces cerevisiae (strain ATCC 204508 / S288c) (Baker's yeast).